Consider the following 31-residue polypeptide: Large ribosomal subunit protein bL21 (31 aa).

The protein belongs to the bacterial ribosomal protein bL21 family. As to quaternary structure, part of the 50S ribosomal subunit. Contacts protein L20.

Functionally, this protein binds to 23S rRNA in the presence of protein L20. The protein is Large ribosomal subunit protein bL21 (rplU) of Streptococcus thermophilus.